The sequence spans 660 residues: MKTVVFAYHDMGCLGIEALLAAGYEISAIFTHTDNPAEKAFYGSVARLAAERGIPVYAPDNVNHPLWVERIAQLSPEVIFSFYYRHLICDEILQLAPAGAFNLHGSLLPKYRGRAPLNWVLVNGETETGVTLHRMVKRADAGAIVAQLRVAIAPDDIAITLHHKLCHAARQLLEQTLPAIKHGNILEIAQRENEATCFGHRTPDDSFLEWHKPASVLHNMVRAVADPWPGAFSYVGNQKFTVWSSRVHPHASKAQPGSVISVAPLLIACGDGALEIVTGQAGDGITMQGSQLAQMLGLVQGSRLNSQPACTARRRTRVLILGVNGFIGNHLTERLLREDHYEVYGLDIGSDAISRFLNHPHFHFVEGDISIHSEWIEYHVKKCDVVLPLVAIATPIEYTRNPLRVFELDFEENLRIIRYCVKYRKRIIFPSTSEVYGMCSDKYFDEDHSNLIVGPVNKPRWIYSVSKQLLDRVIWAYGEKEGLQFTLFRPFNWMGPRLDNLNAARIGSSRAITQLILNLVEGSPIKLIDGGKQKRCFTDIRDGIEALYRIIENAGNRCDGEIINIGNPENEASIEELGEMLLASFEKHPLRHHFPPFAGFRVVESSSYYGKGYQDVEHRKPSIRNARRCLDWEPKIDMQETIDETLDFFLRTVDLTDKPS.

The tract at residues 1–304 is formyltransferase ArnAFT; sequence MKTVVFAYHD…MLGLVQGSRL (304 aa). 86–88 contacts (6R)-10-formyltetrahydrofolate; sequence HLI. Residue H104 is the Proton donor; for formyltransferase activity of the active site. (6R)-10-formyltetrahydrofolate-binding positions include R114 and 136–140; that span reads VKRAD. Residues 314–660 are dehydrogenase ArnADH; that stretch reads RRTRVLILGV…RTVDLTDKPS (347 aa). NAD(+) contacts are provided by residues D347 and 368–369; that span reads DI. Residues A393, Y398, and 432-433 each bind UDP-alpha-D-glucuronate; that span reads TS. Residue E434 is the Proton acceptor; for decarboxylase activity of the active site. Residues R460, N492, 526-535, and Y613 contribute to the UDP-alpha-D-glucuronate site; that span reads KLIDGGKQKR. The Proton donor; for decarboxylase activity role is filled by R619.

It in the N-terminal section; belongs to the Fmt family. UDP-L-Ara4N formyltransferase subfamily. This sequence in the C-terminal section; belongs to the NAD(P)-dependent epimerase/dehydratase family. UDP-glucuronic acid decarboxylase subfamily. Homohexamer, formed by a dimer of trimers.

The enzyme catalyses UDP-alpha-D-glucuronate + NAD(+) = UDP-beta-L-threo-pentopyranos-4-ulose + CO2 + NADH. It catalyses the reaction UDP-4-amino-4-deoxy-beta-L-arabinose + (6R)-10-formyltetrahydrofolate = UDP-4-deoxy-4-formamido-beta-L-arabinose + (6S)-5,6,7,8-tetrahydrofolate + H(+). Its pathway is nucleotide-sugar biosynthesis; UDP-4-deoxy-4-formamido-beta-L-arabinose biosynthesis; UDP-4-deoxy-4-formamido-beta-L-arabinose from UDP-alpha-D-glucuronate: step 1/3. It participates in nucleotide-sugar biosynthesis; UDP-4-deoxy-4-formamido-beta-L-arabinose biosynthesis; UDP-4-deoxy-4-formamido-beta-L-arabinose from UDP-alpha-D-glucuronate: step 3/3. It functions in the pathway bacterial outer membrane biogenesis; lipopolysaccharide biosynthesis. Bifunctional enzyme that catalyzes the oxidative decarboxylation of UDP-glucuronic acid (UDP-GlcUA) to UDP-4-keto-arabinose (UDP-Ara4O) and the addition of a formyl group to UDP-4-amino-4-deoxy-L-arabinose (UDP-L-Ara4N) to form UDP-L-4-formamido-arabinose (UDP-L-Ara4FN). The modified arabinose is attached to lipid A and is required for resistance to polymyxin and cationic antimicrobial peptides. The polypeptide is Bifunctional polymyxin resistance protein ArnA (Shigella sonnei (strain Ss046)).